A 325-amino-acid polypeptide reads, in one-letter code: Ribosomal RNA small subunit methyltransferase H (325 aa).

Residues 32–34 (GGH), Asp52, Phe79, Asp100, and Gln107 contribute to the S-adenosyl-L-methionine site.

This sequence belongs to the methyltransferase superfamily. RsmH family.

The protein resides in the cytoplasm. It catalyses the reaction cytidine(1402) in 16S rRNA + S-adenosyl-L-methionine = N(4)-methylcytidine(1402) in 16S rRNA + S-adenosyl-L-homocysteine + H(+). Specifically methylates the N4 position of cytidine in position 1402 (C1402) of 16S rRNA. This chain is Ribosomal RNA small subunit methyltransferase H, found in Oceanobacillus iheyensis (strain DSM 14371 / CIP 107618 / JCM 11309 / KCTC 3954 / HTE831).